The chain runs to 199 residues: Probable molybdenum cofactor guanylyltransferase (199 aa).

Residues 9 to 11 (LAG), Lys21, Asp69, and Asp100 contribute to the GTP site. Asp100 contacts Mg(2+).

The protein belongs to the MobA family. The cofactor is Mg(2+).

Its subcellular location is the cytoplasm. The enzyme catalyses Mo-molybdopterin + GTP + H(+) = Mo-molybdopterin guanine dinucleotide + diphosphate. Its function is as follows. Transfers a GMP moiety from GTP to Mo-molybdopterin (Mo-MPT) cofactor (Moco or molybdenum cofactor) to form Mo-molybdopterin guanine dinucleotide (Mo-MGD) cofactor. The protein is Probable molybdenum cofactor guanylyltransferase of Bacillus cytotoxicus (strain DSM 22905 / CIP 110041 / 391-98 / NVH 391-98).